The following is a 233-amino-acid chain: Large ribosomal subunit protein uL1 (233 aa).

It belongs to the universal ribosomal protein uL1 family. As to quaternary structure, part of the 50S ribosomal subunit.

Its function is as follows. Binds directly to 23S rRNA. The L1 stalk is quite mobile in the ribosome, and is involved in E site tRNA release. Functionally, protein L1 is also a translational repressor protein, it controls the translation of the L11 operon by binding to its mRNA. The polypeptide is Large ribosomal subunit protein uL1 (Shewanella pealeana (strain ATCC 700345 / ANG-SQ1)).